The primary structure comprises 181 residues: Probable cobalt-precorrin-6B C(15)-methyltransferase (decarboxylating) (181 aa).

S-adenosyl-L-methionine contacts are provided by residues threonine 16, 40–44, aspartate 61, and alanine 89; that span reads GCGSG.

This sequence belongs to the methyltransferase superfamily. Archaeal-type CbiT family.

The catalysed reaction is Co-precorrin-6B + S-adenosyl-L-methionine = Co-precorrin-7 + S-adenosyl-L-homocysteine + CO2. Its pathway is cofactor biosynthesis; adenosylcobalamin biosynthesis; cob(II)yrinate a,c-diamide from sirohydrochlorin (anaerobic route): step 8/10. In terms of biological role, catalyzes the methylation of C-15 in cobalt-precorrin-6B followed by the decarboxylation of C-12 to form cobalt-precorrin-7. The protein is Probable cobalt-precorrin-6B C(15)-methyltransferase (decarboxylating) of Methanococcus maripaludis (strain C7 / ATCC BAA-1331).